We begin with the raw amino-acid sequence, 194 residues long: Imidazoleglycerol-phosphate dehydratase (194 aa).

This sequence belongs to the imidazoleglycerol-phosphate dehydratase family.

It localises to the cytoplasm. It carries out the reaction D-erythro-1-(imidazol-4-yl)glycerol 3-phosphate = 3-(imidazol-4-yl)-2-oxopropyl phosphate + H2O. It participates in amino-acid biosynthesis; L-histidine biosynthesis; L-histidine from 5-phospho-alpha-D-ribose 1-diphosphate: step 6/9. This is Imidazoleglycerol-phosphate dehydratase from Bacillus velezensis (strain DSM 23117 / BGSC 10A6 / LMG 26770 / FZB42) (Bacillus amyloliquefaciens subsp. plantarum).